The primary structure comprises 149 residues: Large ribosomal subunit protein bL17 (149 aa).

Belongs to the bacterial ribosomal protein bL17 family. In terms of assembly, part of the 50S ribosomal subunit. Contacts protein L32.

In Kosmotoga olearia (strain ATCC BAA-1733 / DSM 21960 / TBF 19.5.1), this protein is Large ribosomal subunit protein bL17.